Consider the following 388-residue polypeptide: Pepsin A-3 (388 aa).

The signal sequence occupies residues 1–15 (MKWLLLLGLVALSEC). Residues 16 to 62 (IMYKVPLIRKKSLRRTLSERGLLKDFLKKHNLNPARKYFPQWKAPTL) constitute a propeptide, activation peptide. One can recognise a Peptidase A1 domain in the interval 76 to 385 (YFGTIGIGTP…DRANNQVGLA (310 aa)). Residue Asp94 is part of the active site. Intrachain disulfides connect Cys107–Cys112 and Cys268–Cys272. Asp277 is an active-site residue. The cysteines at positions 311 and 344 are disulfide-linked.

The protein belongs to the peptidase A1 family.

The protein resides in the secreted. The catalysed reaction is Preferential cleavage: hydrophobic, preferably aromatic, residues in P1 and P1' positions. Cleaves 1-Phe-|-Val-2, 4-Gln-|-His-5, 13-Glu-|-Ala-14, 14-Ala-|-Leu-15, 15-Leu-|-Tyr-16, 16-Tyr-|-Leu-17, 23-Gly-|-Phe-24, 24-Phe-|-Phe-25 and 25-Phe-|-Tyr-26 bonds in the B chain of insulin.. Shows particularly broad specificity; although bonds involving phenylalanine and leucine are preferred, many others are also cleaved to some extent. The chain is Pepsin A-3 (PGA3) from Homo sapiens (Human).